The following is a 940-amino-acid chain: UvrABC system protein A (940 aa).

31-38 is an ATP binding site; it reads GLSGSGKS. The C4-type zinc-finger motif lies at 253 to 280; the sequence is CPICGYSMRELEPRLFSFNNPAGACPTC. ABC transporter domains follow at residues 310–587 and 607–937; these read WDRR…PESL and ANPE…RFLK. 640–647 is an ATP binding site; that stretch reads GVSGSGKS. Residues 740-766 form a C4-type zinc finger; that stretch reads CEACQGDGVIKVEMHFLPDIYVPCDQC.

It belongs to the ABC transporter superfamily. UvrA family. Forms a heterotetramer with UvrB during the search for lesions.

It localises to the cytoplasm. Functionally, the UvrABC repair system catalyzes the recognition and processing of DNA lesions. UvrA is an ATPase and a DNA-binding protein. A damage recognition complex composed of 2 UvrA and 2 UvrB subunits scans DNA for abnormalities. When the presence of a lesion has been verified by UvrB, the UvrA molecules dissociate. Its function is as follows. Plays a role in recovery after DNA ADP-ribosylation. In Escherichia coli O127:H6 (strain E2348/69 / EPEC), this protein is UvrABC system protein A.